A 471-amino-acid chain; its full sequence is Ankyrin repeat and death domain-containing protein 1A (471 aa).

10 ANK repeats span residues 19 to 48 (VGRV…AVDE), 52 to 81 (FGMN…KIHC), 85 to 114 (DGLT…DVAL), 120 to 149 (LGRT…DHSV), 153 to 182 (EGNT…DLEE), 186 to 215 (EGLT…TVNA), 219 to 248 (KNLS…CTNV), 251 to 280 (HGAS…DLNA), 284 to 313 (RQQT…DLNL), and 317 to 346 (QGKT…FYKW). Residues 379–467 (SVLWRLASRH…DLAELAVASV (89 aa)) form the Death domain.

This chain is Ankyrin repeat and death domain-containing protein 1A (ANKDD1A), found in Macaca fascicularis (Crab-eating macaque).